We begin with the raw amino-acid sequence, 180 residues long: ATP-dependent protease subunit HslV (180 aa).

The active site involves Thr6. Na(+)-binding residues include Ala164, Cys167, and Thr170.

It belongs to the peptidase T1B family. HslV subfamily. In terms of assembly, a double ring-shaped homohexamer of HslV is capped on each side by a ring-shaped HslU homohexamer. The assembly of the HslU/HslV complex is dependent on binding of ATP.

It is found in the cytoplasm. The enzyme catalyses ATP-dependent cleavage of peptide bonds with broad specificity.. With respect to regulation, allosterically activated by HslU binding. In terms of biological role, protease subunit of a proteasome-like degradation complex believed to be a general protein degrading machinery. The protein is ATP-dependent protease subunit HslV of Borrelia hermsii (strain HS1 / DAH).